Reading from the N-terminus, the 69-residue chain is Probable Sec-independent protein translocase protein TatE (69 aa).

The chain crosses the membrane as a helical span at residues 1-21 (MEGISIAKLLVIGALIVLLFG). A disordered region spans residues 45-69 (DDQPAAKSSAQDEHPAAISETRPKE). Residues 54–69 (AQDEHPAAISETRPKE) are compositionally biased toward basic and acidic residues.

Belongs to the TatA/E family. TatE subfamily.

It localises to the cell inner membrane. In terms of biological role, part of the twin-arginine translocation (Tat) system that transports large folded proteins containing a characteristic twin-arginine motif in their signal peptide across membranes. TatE shares overlapping functions with TatA. This is Probable Sec-independent protein translocase protein TatE from Dickeya chrysanthemi (strain Ech1591) (Dickeya zeae (strain Ech1591)).